We begin with the raw amino-acid sequence, 121 residues long: MGTPEGIDVITVVISEAPYGQERAYTALRFALTALVEGEEVKIFLIEDGVFLGKKGQNPDEVPNYLELLEQCIEQGAEVKACGPCSKARGLSEEDFIEGVELATMHDLVNWVKESDNVIFF.

It to M.jannaschii MJ0989.

This is an uncharacterized protein from Methanopyrus kandleri (strain AV19 / DSM 6324 / JCM 9639 / NBRC 100938).